Here is an 844-residue protein sequence, read N- to C-terminus: MVNFTIDEIRALMDKPTNVRNMSVIAHVDHGKSTLTDSLLAKAGIISSGKAGEARATDTRADEQERGITIKSTAISLYGTLPDEEDIKDIVGQKTDGKDFLINLIDSPGHVDFSSEVTAALRVTDGALVVVDTVEGVCVQTETVLRQALGERIKPVVVINKVDRALLELQVSKEDLYQSFSRTIESVNVIISTYFDKSLGDVQVYPDRGTVAFGSGLHGWAFTIRQFATRYAKKFGVDRNKMMERLWGDNYFNPKTKKWTKNGTYEGKELERAFNQFILDPIFKIFSAVMNFKKDEVAALLEKLNLKLATDDREKEGKQLLKAVMKAFLPAADCLLEMMILHLPSPVTAQAYRAETLYEGPQDDEAAMAIKTCDPKGPLMLYVSKMVPTSDKGRFYAFGRVFAGTVRSGLKVRIQGPNYTPGKKEDLFIKAIQRTVLMMGGKVEPIDDMPAGNIVGLVGIDQFLLKSGTLTTSETAHNMKVMKFSVSPVVQRSVQVKNAQDLPKLVEGLKRLSKSDPCVLTFSNESGEHVVAGAGELHLEICLNDLENDHAGVPLTISDPVVQYRETVAGKSSMTALSKSPNKHNRLYMVAEPLEEDLCLAIEAGKITPRDDFKARARILADDFGWDVTDARKIWAFGPDTNGANLLVDQTKAVQYLNEIKDSVVSGFQWATREGPIGEEPMRSIRFNILDVTLHADAIHRGGGQIIPTARRVLYAATLLAEPSLLEPVFLVEIQVPEQAMGGVYGVLTRRRGHVFGEEQRPGTPLFTIKAYLPVMESFGFNGDLRAATSGQAFPQSVFDHWERLPGGSPLDSTSKVGQIVQEMRKRKGLKVEVPGYENYYDKL.

The region spanning T17–K255 is the tr-type G domain. A26–S33 contributes to the GTP binding site. Phosphothreonine is present on residues T57 and T59. GTP contacts are provided by residues N160 to D163 and S215 to L217. H700 is modified (diphthamide).

This sequence belongs to the TRAFAC class translation factor GTPase superfamily. Classic translation factor GTPase family. EF-G/EF-2 subfamily.

It localises to the cytoplasm. The enzyme catalyses GTP + H2O = GDP + phosphate + H(+). Catalyzes the GTP-dependent ribosomal translocation step during translation elongation. During this step, the ribosome changes from the pre-translocational (PRE) to the post-translocational (POST) state as the newly formed A-site-bound peptidyl-tRNA and P-site-bound deacylated tRNA move to the P and E sites, respectively. Catalyzes the coordinated movement of the two tRNA molecules, the mRNA and conformational changes in the ribosome. This Neurospora crassa (strain ATCC 24698 / 74-OR23-1A / CBS 708.71 / DSM 1257 / FGSC 987) protein is Elongation factor 2 (cot-3).